A 336-amino-acid polypeptide reads, in one-letter code: Phosphate acetyltransferase (336 aa).

The protein belongs to the phosphate acetyltransferase and butyryltransferase family.

It localises to the cytoplasm. It carries out the reaction acetyl-CoA + phosphate = acetyl phosphate + CoA. The protein operates within metabolic intermediate biosynthesis; acetyl-CoA biosynthesis; acetyl-CoA from acetate: step 2/2. This Treponema pallidum (strain Nichols) protein is Phosphate acetyltransferase (pta).